Reading from the N-terminus, the 539-residue chain is GMP synthase [glutamine-hydrolyzing] (539 aa).

Positions Lys4–Asp202 constitute a Glutamine amidotransferase type-1 domain. Cys81 serves as the catalytic Nucleophile. Active-site residues include His176 and Glu178. A GMPS ATP-PPase domain is found at Trp203–Arg395. Ser230 to Ser236 contributes to the ATP binding site.

In terms of assembly, homodimer.

The enzyme catalyses XMP + L-glutamine + ATP + H2O = GMP + L-glutamate + AMP + diphosphate + 2 H(+). Its pathway is purine metabolism; GMP biosynthesis; GMP from XMP (L-Gln route): step 1/1. In terms of biological role, catalyzes the synthesis of GMP from XMP. This chain is GMP synthase [glutamine-hydrolyzing], found in Burkholderia vietnamiensis (strain G4 / LMG 22486) (Burkholderia cepacia (strain R1808)).